Reading from the N-terminus, the 126-residue chain is Bactofilin BacO (126 aa).

This sequence belongs to the bactofilin family. Interacts with BacN and probably also BacP, the 3 proteins colocalize as an extended structure. Interacts with PadC.

It is found in the cytoplasm. The protein resides in the cytoskeleton. Its function is as follows. A non-essential component of the chromosome segregation machinery. Positions the ParA-ParB-parS chromosome segregation machinery within the cell; BacP seems to be the most important bactofilin in this process. Forms a heteropolymeric, subpolar scaffold in the cell; BacP probably forms the core, BacO contributes to position and integrity while BacN does not seem to contribute to assembly. This is Bactofilin BacO from Myxococcus xanthus (strain DK1622).